The following is a 354-amino-acid chain: Photosystem II protein D1 2 (354 aa).

3 helical membrane-spanning segments follow: residues 29–46, 118–133, and 142–156; these read YIGWFGVLMIPTLLTATT, HFLIGVFCYMGREWEL, and WIAVAYSAPVAAATA. His-118 provides a ligand contact to chlorophyll a. Residue Tyr-126 participates in pheophytin a binding. [CaMn4O5] cluster-binding residues include Asp-170 and Glu-189. Residues 197–218 traverse the membrane as a helical segment; that stretch reads FHQLGVAGVFGGALFSAMHGSL. Residue His-198 coordinates chlorophyll a. A quinone-binding positions include His-215 and 264-265; that span reads SF. His-215 contributes to the Fe cation binding site. His-272 is a Fe cation binding site. A helical transmembrane segment spans residues 274–288; it reads FLAAWPVIGIWFTAL. His-332, Glu-333, Asp-342, and Ala-344 together coordinate [CaMn4O5] cluster. The propeptide occupies 345–354; that stretch reads AVEVAPAVRG.

This sequence belongs to the reaction center PufL/M/PsbA/D family. In terms of assembly, PSII is composed of 1 copy each of membrane proteins PsbA, PsbB, PsbC, PsbD, PsbE, PsbF, PsbH, PsbI, PsbJ, PsbK, PsbL, PsbM, PsbT, PsbX, PsbY, PsbZ, Psb30/Ycf12, peripheral proteins PsbO, CyanoQ (PsbQ), PsbU, PsbV and a large number of cofactors. It forms dimeric complexes. The D1/D2 heterodimer binds P680, chlorophylls that are the primary electron donor of PSII, and subsequent electron acceptors. It shares a non-heme iron and each subunit binds pheophytin, quinone, additional chlorophylls, carotenoids and lipids. D1 provides most of the ligands for the Mn4-Ca-O5 cluster of the oxygen-evolving complex (OEC). There is also a Cl(-1) ion associated with D1 and D2, which is required for oxygen evolution. The PSII complex binds additional chlorophylls, carotenoids and specific lipids. is required as a cofactor. Tyr-161 forms a radical intermediate that is referred to as redox-active TyrZ, YZ or Y-Z. Post-translationally, C-terminally processed by CtpA; processing is essential to allow assembly of the oxygen-evolving complex and thus photosynthetic growth.

It localises to the cellular thylakoid membrane. The catalysed reaction is 2 a plastoquinone + 4 hnu + 2 H2O = 2 a plastoquinol + O2. Photosystem II (PSII) is a light-driven water:plastoquinone oxidoreductase that uses light energy to abstract electrons from H(2)O, generating O(2) and a proton gradient subsequently used for ATP formation. It consists of a core antenna complex that captures photons, and an electron transfer chain that converts photonic excitation into a charge separation. The D1/D2 (PsbA/PsbD) reaction center heterodimer binds P680, the primary electron donor of PSII as well as several subsequent electron acceptors. The protein is Photosystem II protein D1 2 of Synechococcus sp. (strain JA-2-3B'a(2-13)) (Cyanobacteria bacterium Yellowstone B-Prime).